The following is a 206-amino-acid chain: uncharacterized protein (206 aa).

One can recognise a MurNAc-LAA domain in the interval 32 to 201 (VYIDAGHGGE…AADAIVNGID (170 aa)).

It belongs to the N-acetylmuramoyl-L-alanine amidase 3 family.

This is an uncharacterized protein from Bacillus subtilis (strain 168).